Here is a 714-residue protein sequence, read N- to C-terminus: Polyribonucleotide nucleotidyltransferase (714 aa).

Positions 489 and 495 each coordinate Mg(2+). The region spanning 556-615 (PKIDTIKIDVDKIKVVIGKGGETIDKIIAETGVKIDIDEEGNVSIYSSDQDAINRAKEII) is the KH domain. Positions 625–693 (GEVYHAKVVR…DKGRIDASMK (69 aa)) constitute an S1 motif domain. The interval 691 to 714 (SMKALVPRPPKPEKSEAKKEGKHD) is disordered. Residues 700 to 714 (PKPEKSEAKKEGKHD) are compositionally biased toward basic and acidic residues.

Belongs to the polyribonucleotide nucleotidyltransferase family. The cofactor is Mg(2+).

The protein resides in the cytoplasm. It catalyses the reaction RNA(n+1) + phosphate = RNA(n) + a ribonucleoside 5'-diphosphate. Involved in mRNA degradation. Catalyzes the phosphorolysis of single-stranded polyribonucleotides processively in the 3'- to 5'-direction. This is Polyribonucleotide nucleotidyltransferase from Streptococcus equi subsp. zooepidemicus (strain H70).